A 327-amino-acid chain; its full sequence is Glycerol-3-phosphate dehydrogenase [NAD(P)+] (327 aa).

NADPH-binding residues include Trp15, Arg35, and Lys109. Sn-glycerol 3-phosphate is bound by residues Lys109, Gly137, and Ser139. Residue Ala141 participates in NADPH binding. 5 residues coordinate sn-glycerol 3-phosphate: Lys192, Asp245, Ser255, Arg256, and Asn257. Residue Lys192 is the Proton acceptor of the active site. NADPH is bound at residue Arg256. NADPH contacts are provided by Leu275 and Glu277.

This sequence belongs to the NAD-dependent glycerol-3-phosphate dehydrogenase family.

It localises to the cytoplasm. It catalyses the reaction sn-glycerol 3-phosphate + NAD(+) = dihydroxyacetone phosphate + NADH + H(+). The enzyme catalyses sn-glycerol 3-phosphate + NADP(+) = dihydroxyacetone phosphate + NADPH + H(+). It participates in membrane lipid metabolism; glycerophospholipid metabolism. Its function is as follows. Catalyzes the reduction of the glycolytic intermediate dihydroxyacetone phosphate (DHAP) to sn-glycerol 3-phosphate (G3P), the key precursor for phospholipid synthesis. In Chelativorans sp. (strain BNC1), this protein is Glycerol-3-phosphate dehydrogenase [NAD(P)+].